The following is a 68-amino-acid chain: MARVTVEDCLEKVDNRFLLVMLSSKRVKQLFKGARPLIDNRGANKNVVVSLREIAAGKIGCEIGKKGR.

It belongs to the RNA polymerase subunit omega family. As to quaternary structure, the RNAP catalytic core consists of 2 alpha, 1 beta, 1 beta' and 1 omega subunit. When a sigma factor is associated with the core the holoenzyme is formed, which can initiate transcription.

It catalyses the reaction RNA(n) + a ribonucleoside 5'-triphosphate = RNA(n+1) + diphosphate. In terms of biological role, promotes RNA polymerase assembly. Latches the N- and C-terminal regions of the beta' subunit thereby facilitating its interaction with the beta and alpha subunits. This Geobacter sp. (strain M21) protein is DNA-directed RNA polymerase subunit omega.